The following is a 245-amino-acid chain: DNA repair protein RecO (245 aa).

The protein belongs to the RecO family.

Its function is as follows. Involved in DNA repair and RecF pathway recombination. The protein is DNA repair protein RecO of Klebsiella pneumoniae subsp. pneumoniae (strain ATCC 700721 / MGH 78578).